Consider the following 459-residue polypeptide: Cell division protein FtsZ (459 aa).

GTP is bound by residues glycine 25 to asparagine 29, glycine 112 to glycine 114, glutamate 143, arginine 147, and aspartate 191. Disordered stretches follow at residues aspartate 383 to glutamate 405 and isoleucine 427 to aspartate 459.

This sequence belongs to the FtsZ family. As to quaternary structure, homodimer. Polymerizes to form a dynamic ring structure in a strictly GTP-dependent manner. Interacts directly with several other division proteins.

The protein resides in the cytoplasm. Essential cell division protein that forms a contractile ring structure (Z ring) at the future cell division site. The regulation of the ring assembly controls the timing and the location of cell division. One of the functions of the FtsZ ring is to recruit other cell division proteins to the septum to produce a new cell wall between the dividing cells. Binds GTP and shows GTPase activity. This is Cell division protein FtsZ from Rickettsia bellii (strain RML369-C).